The chain runs to 149 residues: Calmodulin (149 aa).

A2 is subject to N-acetylalanine. EF-hand domains follow at residues 8–43, 44–79, 81–116, and 117–149; these read EQIAEFKEAFSLFDKDGDGCITTKELGTVMRSLGQN, PTEAELQDMISEVDADQNGTIDFPEFLNLMARKMKD, DSEEELKEAFKVFDKDQNGFISAAELRHVMTNLGEK, and LTDEEVDEMIREADIDGDGQVNYEEFVRMMLAK. D21, D23, D25, C27, E32, D57, D59, N61, T63, E68, D94, D96, N98, and E105 together coordinate Ca(2+). N6,N6,N6-trimethyllysine is present on K116. 5 residues coordinate Ca(2+): D130, D132, D134, Q136, and E141.

This sequence belongs to the calmodulin family.

Calmodulin mediates the control of a large number of enzymes, ion channels and other proteins by Ca(2+). Among the enzymes to be stimulated by the calmodulin-Ca(2+) complex are a number of protein kinases and phosphatases. The sequence is that of Calmodulin (CALM1) from Solanum lycopersicum (Tomato).